The following is a 1047-amino-acid chain: Error-prone DNA polymerase (1047 aa).

This sequence belongs to the DNA polymerase type-C family. DnaE2 subfamily.

The protein resides in the cytoplasm. The enzyme catalyses DNA(n) + a 2'-deoxyribonucleoside 5'-triphosphate = DNA(n+1) + diphosphate. Functionally, DNA polymerase involved in damage-induced mutagenesis and translesion synthesis (TLS). It is not the major replicative DNA polymerase. The sequence is that of Error-prone DNA polymerase from Methylococcus capsulatus (strain ATCC 33009 / NCIMB 11132 / Bath).